Here is an 886-residue protein sequence, read N- to C-terminus: Kinesin-like protein KIF18A (886 aa).

Residues 11–355 enclose the Kinesin motor domain; sequence RMKVVVRVRP…LKYANRAKEI (345 aa). Residue Lys24 forms a Glycyl lysine isopeptide (Lys-Gly) (interchain with G-Cter in SUMO2) linkage. 113 to 120 serves as a coordination point for ATP; the sequence is GATGSGKT. A coiled-coil region spans residues 370 to 404; the sequence is ISQYVKICNMQKAEILMLKEKLKAYEEQKALSDRN. Phosphoserine is present on Ser674. A Glycyl lysine isopeptide (Lys-Gly) (interchain with G-Cter in SUMO2) cross-link involves residue Lys683. Position 695 is a phosphoserine (Ser695). The disordered stretch occupies residues 774 to 804; that stretch reads EQEPLASSKSSVHRIESSSFSTKDSMPESAG. Residue Lys782 forms a Glycyl lysine isopeptide (Lys-Gly) (interchain with G-Cter in SUMO2) linkage. Ser826 bears the Phosphoserine mark. Lys862 is covalently cross-linked (Glycyl lysine isopeptide (Lys-Gly) (interchain with G-Cter in SUMO2)). The tract at residues 862–886 is disordered; the sequence is KRNTNKTNSNMLRKFRRNTSKENVQ.

Belongs to the TRAFAC class myosin-kinesin ATPase superfamily. Kinesin family. Interacts with CENPE and ESR1. Post-translationally, glycosylated. Ubiquitinated.

It localises to the cell projection. Its subcellular location is the ruffle. The protein resides in the cytoplasm. The protein localises to the nucleus. It is found in the cytoskeleton. It localises to the microtubule organizing center. Its subcellular location is the centrosome. Microtubule-depolymerizing kinesin which plays a role in chromosome congression by reducing the amplitude of preanaphase oscillations and slowing poleward movement during anaphase, thus suppressing chromosome movements. May stabilize the CENPE-BUB1B complex at the kinetochores during early mitosis and maintains CENPE levels at kinetochores during chromosome congression. The polypeptide is Kinesin-like protein KIF18A (Kif18a) (Mus musculus (Mouse)).